A 242-amino-acid polypeptide reads, in one-letter code: Putative S-adenosyl-L-methionine-dependent methyltransferase Mmcs_0580 (242 aa).

S-adenosyl-L-methionine is bound by residues Asp-104 and 134–135 (DL).

It belongs to the UPF0677 family.

In terms of biological role, exhibits S-adenosyl-L-methionine-dependent methyltransferase activity. This chain is Putative S-adenosyl-L-methionine-dependent methyltransferase Mmcs_0580, found in Mycobacterium sp. (strain MCS).